The chain runs to 208 residues: Uracil phosphoribosyltransferase (208 aa).

5-phospho-alpha-D-ribose 1-diphosphate is bound by residues arginine 78, arginine 103, and 130–138; that span reads DPMLATGGT. Uracil is bound by residues isoleucine 193 and 198–200; that span reads GDA. Position 199 (aspartate 199) interacts with 5-phospho-alpha-D-ribose 1-diphosphate.

It belongs to the UPRTase family. It depends on Mg(2+) as a cofactor.

It catalyses the reaction UMP + diphosphate = 5-phospho-alpha-D-ribose 1-diphosphate + uracil. The protein operates within pyrimidine metabolism; UMP biosynthesis via salvage pathway; UMP from uracil: step 1/1. Its activity is regulated as follows. Allosterically activated by GTP. Functionally, catalyzes the conversion of uracil and 5-phospho-alpha-D-ribose 1-diphosphate (PRPP) to UMP and diphosphate. The chain is Uracil phosphoribosyltransferase from Solidesulfovibrio magneticus (strain ATCC 700980 / DSM 13731 / RS-1) (Desulfovibrio magneticus).